A 1624-amino-acid chain; its full sequence is Latent-transforming growth factor beta-binding protein 4 (1624 aa).

A signal peptide spans 1–27; it reads MPRPGTSGRRPLLLVLLLPLFAAATSA. The disordered stretch occupies residues 125-146; the sequence is RRPRGPGGRGLLRRRPPQRAPA. Residues 149–181 form the EGF-like 1 domain; that stretch reads APVLCPLICHNGGVCVKPDRCLCPPDFAGKFCQ. Intrachain disulfides connect Cys-153-Cys-163, Cys-157-Cys-169, Cys-171-Cys-180, Cys-289-Cys-311, Cys-298-Cys-324, and Cys-312-Cys-327. The TB 1 domain occupies 287–339; that stretch reads GYCFRELRGGECASPLPGLRTQEVCCRGAGLAWGVHDCQLCSERLGNSERVSA. Asn-352 is a glycosylation site (N-linked (GlcNAc...) asparagine). Positions 357-397 constitute an EGF-like 2; calcium-binding domain; that stretch reads DVDECATGGRCQHGECANTRGGYTCVCPDGFLLDSSRSSCI. Cystine bridges form between Cys-361–Cys-372, Cys-367–Cys-381, Cys-383–Cys-396, Cys-409–Cys-431, Cys-418–Cys-444, Cys-432–Cys-447, and Cys-433–Cys-459. The region spanning 407–459 is the TB 2 domain; sequence GPCFRVLRDGGCSLPILRNITKQICCCSRVGKAWGRGCQLCPPFGSEGFREIC. N-linked (GlcNAc...) asparagine glycosylation occurs at Asn-425. Residues 474–546 form a disordered region; the sequence is YNTRPLGQEP…PEIPESGPSS (73 aa). Positions 487–500 are enriched in polar residues; it reads SLSQPRTLPATSRP. The span at 508 to 522 shows a compositional bias: basic and acidic residues; that stretch reads HRLEPRPEPRPDPRP. The region spanning 545–586 is the EGF-like 3 domain; the sequence is SSGMCQRNPQVCGPGRCISRPSGYTCACDSGFRLSPQGTRCI. Cystine bridges form between Cys-549/Cys-561, Cys-556/Cys-570, Cys-572/Cys-585, Cys-591/Cys-603, Cys-598/Cys-612, Cys-614/Cys-627, Cys-633/Cys-645, Cys-640/Cys-654, Cys-656/Cys-669, Cys-675/Cys-687, Cys-682/Cys-696, Cys-698/Cys-707, Cys-714/Cys-726, Cys-721/Cys-735, Cys-737/Cys-750, Cys-756/Cys-768, Cys-763/Cys-777, Cys-779/Cys-792, Cys-838/Cys-851, Cys-845/Cys-860, Cys-862/Cys-876, Cys-882/Cys-894, Cys-888/Cys-903, Cys-905/Cys-918, Cys-924/Cys-935, Cys-930/Cys-944, Cys-946/Cys-959, Cys-1053/Cys-1065, Cys-1059/Cys-1074, and Cys-1076/Cys-1089. One can recognise an EGF-like 4; calcium-binding domain in the interval 587-628; it reads DVDECRRVPPPCAPGRCENSPGSFRCVCGPGFRAGPRAAECL. The EGF-like 5; calcium-binding domain occupies 629–670; it reads DVDECHRVPPPCDLGRCENTPGSFLCVCPAGYQAAPHGASCQ. Residues 671–708 enclose the EGF-like 6; calcium-binding domain; the sequence is DVDECTQSPGLCGRGACKNLPGSFRCVCPAGFRGSACE. Residues 710–751 enclose the EGF-like 7; calcium-binding domain; that stretch reads DVDECAQEPPPCGPGRCDNTAGSFHCACPAGFRSRGPGAPCQ. The EGF-like 8; calcium-binding domain maps to 752–793; the sequence is DVDECARSPPPCTYGRCENTEGSFQCVCPMGFQPNTAGSECE. Residues 834-877 enclose the EGF-like 9; calcium-binding domain; sequence DVDECSSGAPPCGPHGHCTNTEGSFRCSCAPGYRAPSGRPGPCA. The 42-residue stretch at 878–919 folds into the EGF-like 10; calcium-binding domain; that stretch reads DVNECLEGDFCFPHGECLNTDGSFACTCAPGYRPGPRGASCL. One can recognise an EGF-like 11; calcium-binding domain in the interval 920–960; it reads DVDECSEEDLCQSGICTNTDGSFECICPPGHRAGPDLASCL. An EGF-like 12; calcium-binding domain is found at 1049-1090; sequence DVDECRNRSFCGAHAVCQNLPGSFQCLCDQGYEGARDGRHCV. Asn-1055 carries N-linked (GlcNAc...) asparagine glycosylation. A disordered region spans residues 1130–1179; the sequence is GRCVPPRTSAGTFPGSQPQAPASPVLPARPPPPPLPRRPSTPRQGPVGSG. Polar residues predominate over residues 1138-1149; it reads SAGTFPGSQPQA. Pro residues predominate over residues 1156–1168; the sequence is PARPPPPPLPRRP. Residues 1181 to 1235 form the TB 3 domain; it reads RECYFDTAAPDACDNILARNVTWQECCCTVGEGWGSGCRIQQCPGTETAEYQSLC. Intrachain disulfides connect Cys-1183/Cys-1206, Cys-1193/Cys-1218, Cys-1207/Cys-1223, Cys-1208/Cys-1235, Cys-1257/Cys-1270, Cys-1265/Cys-1279, Cys-1281/Cys-1294, Cys-1300/Cys-1312, Cys-1307/Cys-1321, and Cys-1323/Cys-1336. The N-linked (GlcNAc...) asparagine glycan is linked to Asn-1200. An EGF-like 13; calcium-binding domain is found at 1253–1295; that stretch reads DVDECQLFRDQVCKSGVCVNTAPGYSCYCSNGYYYHTQRLECI. The region spanning 1296-1337 is the EGF-like 14; calcium-binding domain; sequence DNDECADEEPACEGGRCVNTVGSYHCTCEPPLVLDGSQRRCV. Asn-1339 carries an N-linked (GlcNAc...) asparagine glycan. Positions 1349–1402 constitute a TB 4 domain; sequence GVCWQEVGADLVCSHPRLDRQATYTECCCLYGEAWGMDCALCPAQDSDDFEALC. Intrachain disulfides connect Cys-1351–Cys-1375, Cys-1361–Cys-1387, Cys-1376–Cys-1390, and Cys-1377–Cys-1402. A compositionally biased stretch (pro residues) spans 1446 to 1458; that stretch reads ALPYDPYPPPPGP. Residues 1446 to 1524 are disordered; it reads ALPYDPYPPP…PPEGGSYAGS (79 aa). The span at 1501–1510 shows a compositional bias: basic and acidic residues; the sequence is RSRDTRRSFP. 2 consecutive EGF-like domains span residues 1533-1573 and 1574-1618; these read EAEE…MACV and DINE…HHCA. Disulfide bonds link Cys-1537-Cys-1548, Cys-1543-Cys-1557, Cys-1559-Cys-1572, Cys-1578-Cys-1593, Cys-1588-Cys-1602, and Cys-1604-Cys-1617.

The protein belongs to the LTBP family. Forms part of the large latent transforming growth factor beta precursor complex; removal is essential for activation of complex. Interacts with LTBP1 and TGFB1. Interacts with EFEMP2; this interaction promotes fibrillar deposition of EFEMP2. Contains hydroxylated asparagine residues. As to expression, highly expressed in heart, skeletal muscle, pancreas, uterus, and small intestine. Weakly expressed in placenta and lung.

It is found in the secreted. Its subcellular location is the extracellular space. The protein localises to the extracellular matrix. In terms of biological role, key regulator of transforming growth factor beta (TGFB1, TGFB2 and TGFB3) that controls TGF-beta activation by maintaining it in a latent state during storage in extracellular space. Associates specifically via disulfide bonds with the Latency-associated peptide (LAP), which is the regulatory chain of TGF-beta, and regulates integrin-dependent activation of TGF-beta. This is Latent-transforming growth factor beta-binding protein 4 (LTBP4) from Homo sapiens (Human).